A 358-amino-acid chain; its full sequence is MTRLTLALDVMGGDFGPSVTVPAALQALNSNSQLTLLLVGNPDTITPLLAKADFEQRSRLQIIPAQSVIASNARPSQAIRASRGSSMRVALELVKEGRAQACVSAGNTGALMGLAKLLLKPLEGIERPALVTVLPHQQKGKTVVLDLGANVDCDSTMLVQFAIMGSVLAEEVVGIPNPRVALLNIGEEEVKGLDSIRDASAVLKTISSVNYIGYLEANELLTGKTDVLVCDGFTGNVTLKTMEGVVRMFLSLLKSQGEGKKRSWWLLLLKRWLQKSLTRRFSHLNPDQYNGACLLGLRGTVIKSHGAANQRAFAVAIEQAVQAVQRQVPQRIAARLKSVYPAGFELLEDERGKKPNHR.

The protein belongs to the PlsX family. Homodimer. Probably interacts with PlsY.

The protein resides in the cytoplasm. The enzyme catalyses a fatty acyl-[ACP] + phosphate = an acyl phosphate + holo-[ACP]. Its pathway is lipid metabolism; phospholipid metabolism. Catalyzes the reversible formation of acyl-phosphate (acyl-PO(4)) from acyl-[acyl-carrier-protein] (acyl-ACP). This enzyme utilizes acyl-ACP as fatty acyl donor, but not acyl-CoA. This Escherichia fergusonii (strain ATCC 35469 / DSM 13698 / CCUG 18766 / IAM 14443 / JCM 21226 / LMG 7866 / NBRC 102419 / NCTC 12128 / CDC 0568-73) protein is Phosphate acyltransferase.